The sequence spans 268 residues: Tryptophan synthase alpha chain (268 aa).

Catalysis depends on proton acceptor residues glutamate 40 and aspartate 51.

The protein belongs to the TrpA family. Tetramer of two alpha and two beta chains.

It carries out the reaction (1S,2R)-1-C-(indol-3-yl)glycerol 3-phosphate + L-serine = D-glyceraldehyde 3-phosphate + L-tryptophan + H2O. It participates in amino-acid biosynthesis; L-tryptophan biosynthesis; L-tryptophan from chorismate: step 5/5. The alpha subunit is responsible for the aldol cleavage of indoleglycerol phosphate to indole and glyceraldehyde 3-phosphate. This is Tryptophan synthase alpha chain from Geobacillus thermodenitrificans (strain NG80-2).